Here is a 363-residue protein sequence, read N- to C-terminus: NAD kinase 1 (363 aa).

Asp-68 acts as the Proton acceptor in catalysis. NAD(+) is bound by residues 68–69 (DG), Arg-73, 175–176 (ND), Arg-186, Asp-205, Ala-240, and Gln-275.

Belongs to the NAD kinase family. Requires a divalent metal cation as cofactor.

The protein resides in the cytoplasm. It catalyses the reaction NAD(+) + ATP = ADP + NADP(+) + H(+). Functionally, involved in the regulation of the intracellular balance of NAD and NADP, and is a key enzyme in the biosynthesis of NADP. Catalyzes specifically the phosphorylation on 2'-hydroxyl of the adenosine moiety of NAD to yield NADP. The polypeptide is NAD kinase 1 (Streptomyces coelicolor (strain ATCC BAA-471 / A3(2) / M145)).